A 128-amino-acid polypeptide reads, in one-letter code: Flagellar assembly factor FliW (128 aa).

Belongs to the FliW family. In terms of assembly, interacts with translational regulator CsrA and flagellin(s).

The protein resides in the cytoplasm. In terms of biological role, acts as an anti-CsrA protein, binds CsrA and prevents it from repressing translation of its target genes, one of which is flagellin. Binds to flagellin and participates in the assembly of the flagellum. This chain is Flagellar assembly factor FliW, found in Campylobacter fetus subsp. fetus (strain 82-40).